A 208-amino-acid chain; its full sequence is Cell death-inducing p53-target protein 1 (208 aa).

Composition is skewed to pro residues over residues 1-13 and 36-67; these read MSSE…PGGP and MQPP…PGFI. The disordered stretch occupies residues 1–71; sequence MSSEPPPPYP…PQPGFIPPHM (71 aa). The LITAF domain occupies 122–206; that stretch reads ATTVTVLQGE…CKAYIYTYKR (85 aa). The Zn(2+) site is built by cysteine 142 and cysteine 145. The interval 164-184 is membrane-binding amphipathic helix; sequence LGFFCCFMGCDLGCCLIPCLI. Positions 194 and 197 each coordinate Zn(2+).

Belongs to the CDIP1/LITAF family. In terms of tissue distribution, highly expressed in brain. Expressed at lower level in heart, skeletal muscle, kidney, pancreas and liver. Weakly or not expressed in placenta and lung.

It is found in the late endosome membrane. Its subcellular location is the lysosome membrane. Functionally, acts as an important p53/TP53-apoptotic effector. Regulates TNF-alpha-mediated apoptosis in a p53/TP53-dependent manner. The chain is Cell death-inducing p53-target protein 1 (CDIP1) from Homo sapiens (Human).